The sequence spans 188 residues: dCTP deaminase (188 aa).

Residues 111–116 (KSTYAR), 135–137 (TLE), Q156, Y170, and Q180 contribute to the dCTP site. E137 (proton donor/acceptor) is an active-site residue.

The protein belongs to the dCTP deaminase family. As to quaternary structure, homotrimer.

It catalyses the reaction dCTP + H2O + H(+) = dUTP + NH4(+). Its pathway is pyrimidine metabolism; dUMP biosynthesis; dUMP from dCTP (dUTP route): step 1/2. In terms of biological role, catalyzes the deamination of dCTP to dUTP. The protein is dCTP deaminase of Thioalkalivibrio sulfidiphilus (strain HL-EbGR7).